Reading from the N-terminus, the 209-residue chain is Uracil phosphoribosyltransferase (209 aa).

5-phospho-alpha-D-ribose 1-diphosphate contacts are provided by residues R79, R104, and 131-139 (DPMLATGNS). Uracil is bound by residues I194 and 199–201 (GDA). A 5-phospho-alpha-D-ribose 1-diphosphate-binding site is contributed by D200.

The protein belongs to the UPRTase family. Mg(2+) serves as cofactor.

The catalysed reaction is UMP + diphosphate = 5-phospho-alpha-D-ribose 1-diphosphate + uracil. The protein operates within pyrimidine metabolism; UMP biosynthesis via salvage pathway; UMP from uracil: step 1/1. Its activity is regulated as follows. Allosterically activated by GTP. Functionally, catalyzes the conversion of uracil and 5-phospho-alpha-D-ribose 1-diphosphate (PRPP) to UMP and diphosphate. The chain is Uracil phosphoribosyltransferase from Sinorhizobium fredii (strain NBRC 101917 / NGR234).